We begin with the raw amino-acid sequence, 379 residues long: Anhydro-N-acetylmuramic acid kinase (379 aa).

9–16 is a binding site for ATP; the sequence is GTSADGVD.

Belongs to the anhydro-N-acetylmuramic acid kinase family.

It catalyses the reaction 1,6-anhydro-N-acetyl-beta-muramate + ATP + H2O = N-acetyl-D-muramate 6-phosphate + ADP + H(+). The protein operates within amino-sugar metabolism; 1,6-anhydro-N-acetylmuramate degradation. It participates in cell wall biogenesis; peptidoglycan recycling. Functionally, catalyzes the specific phosphorylation of 1,6-anhydro-N-acetylmuramic acid (anhMurNAc) with the simultaneous cleavage of the 1,6-anhydro ring, generating MurNAc-6-P. Is required for the utilization of anhMurNAc either imported from the medium or derived from its own cell wall murein, and thus plays a role in cell wall recycling. The protein is Anhydro-N-acetylmuramic acid kinase of Prochlorococcus marinus (strain MIT 9211).